The primary structure comprises 207 residues: Cytochrome c biogenesis ATP-binding export protein CcmA (207 aa).

The ABC transporter domain occupies 2–204 (LEVKNLTAIR…NPKLRKIRLG (203 aa)). 34–41 (GRNGTGKT) contributes to the ATP binding site.

Belongs to the ABC transporter superfamily. CcmA exporter (TC 3.A.1.107) family. As to quaternary structure, the complex is composed of two ATP-binding proteins (CcmA) and two transmembrane proteins (CcmB).

It localises to the cell inner membrane. It catalyses the reaction heme b(in) + ATP + H2O = heme b(out) + ADP + phosphate + H(+). Its function is as follows. Part of the ABC transporter complex CcmAB involved in the biogenesis of c-type cytochromes; once thought to export heme, this seems not to be the case, but its exact role is uncertain. Responsible for energy coupling to the transport system. The polypeptide is Cytochrome c biogenesis ATP-binding export protein CcmA (Vibrio cholerae serotype O1 (strain ATCC 39315 / El Tor Inaba N16961)).